Consider the following 188-residue polypeptide: Peptide deformylase (188 aa).

Residues Cys-107 and His-149 each contribute to the Fe cation site. The active site involves Glu-150. His-153 is a binding site for Fe cation.

This sequence belongs to the polypeptide deformylase family. Requires Fe(2+) as cofactor.

It carries out the reaction N-terminal N-formyl-L-methionyl-[peptide] + H2O = N-terminal L-methionyl-[peptide] + formate. In terms of biological role, removes the formyl group from the N-terminal Met of newly synthesized proteins. Requires at least a dipeptide for an efficient rate of reaction. N-terminal L-methionine is a prerequisite for activity but the enzyme has broad specificity at other positions. This is Peptide deformylase from Thermosynechococcus vestitus (strain NIES-2133 / IAM M-273 / BP-1).